We begin with the raw amino-acid sequence, 623 residues long: Quinoprotein ethanol dehydrogenase (623 aa).

Residues 1 to 34 form the signal peptide; it reads MTIRSLPAALSPLSMAVQAVLLVSSLALAPAANA. Ca(2+)-binding residues include Asp-45 and Asn-51. Residue Glu-95 coordinates pyrroloquinoline quinone. Cys-139 and Cys-140 are joined by a disulfide. Pyrroloquinoline quinone is bound by residues Arg-145, Thr-189, and 207–209; that span reads HGS. Glu-213 lines the Ca(2+) pocket. The interval 242–279 is disordered; that stretch reads GRLNGKDSTPTGDVKAPSWPDDPTTETGKVESWSHGGG. Residues Asn-300 and Asp-350 each contribute to the Ca(2+) site. The active-site Proton acceptor is Asp-350. Arg-378 is a pyrroloquinoline quinone binding site. Residues 414–436 form a disordered region; sequence RPVENEGQRPAKPLPGETKGKPV. 2 WD repeats span residues 515-556 and 559-601; these read EHNE…ELWK and TGSG…LTKP. Residues Trp-523 and Ala-587 each coordinate pyrroloquinoline quinone.

Belongs to the bacterial PQQ dehydrogenase family. Homodimer. Requires pyrroloquinoline quinone as cofactor. Ca(2+) is required as a cofactor.

It localises to the periplasm. The enzyme catalyses a primary alcohol + 2 Fe(III)-[cytochrome c] = an aldehyde + 2 Fe(II)-[cytochrome c] + 2 H(+). It carries out the reaction ethanol + 2 Fe(III)-[cytochrome c] = acetaldehyde + 2 Fe(II)-[cytochrome c] + 2 H(+). The catalysed reaction is ethanol + A = acetaldehyde + AH2. It catalyses the reaction 1-propanol + 2 Fe(III)-[cytochrome c] = propanal + 2 Fe(II)-[cytochrome c] + 2 H(+). It participates in alcohol metabolism; ethanol degradation; acetate from ethanol: step 1/2. With respect to regulation, enhanced by the presence of ethylamine or NH4(+) ions. In terms of biological role, catalyzes the oxidation of ethanol and other primary alcohols to the corresponding aldehydes, except methanol, which is not a substrate. Uses a specific inducible cytochrome c550, encoded by the adjacent gene in the locus, as electron acceptor. Is a key enzyme of the carbon and energy metabolism during growth of P.putida on ethanol as the sole carbon and energy source. Displays lower activity on secondary alcohols, aldehydes and diols. Is not active with sugar alcohols such as glycerol and D-sorbitol. In vitro, reacts well with phenazine methosulfate (PMS) as an electron acceptor but not with NAD(P), potassium ferricyanide, or molecular oxygen. The sequence is that of Quinoprotein ethanol dehydrogenase from Pseudomonas putida (Arthrobacter siderocapsulatus).